Reading from the N-terminus, the 109-residue chain is Spermidine export protein MdtI (109 aa).

Helical transmembrane passes span 6-26 (FYHIAFLILAVILEIIANILL), 35-55 (VWLGILSLLSVLGAFSALAQA), 64-84 (AYALWGGFGIAATVAAGWILF), and 88-108 (LNYKGWIGLILLLAGMVMIKL).

It belongs to the drug/metabolite transporter (DMT) superfamily. Small multidrug resistance (SMR) (TC 2.A.7.1) family. MdtI subfamily. In terms of assembly, forms a complex with MdtJ.

It is found in the cell inner membrane. Catalyzes the excretion of spermidine. This chain is Spermidine export protein MdtI, found in Yersinia enterocolitica serotype O:8 / biotype 1B (strain NCTC 13174 / 8081).